The chain runs to 62 residues: UPF0434 protein RHECIAT_CH0004260 (62 aa).

The protein belongs to the UPF0434 family.

This is UPF0434 protein RHECIAT_CH0004260 from Rhizobium etli (strain CIAT 652).